We begin with the raw amino-acid sequence, 327 residues long: Probable cell division protein WhiA (327 aa).

Positions 275–308 (SLEELGRLADPQMTKDAVAGRIRRLLTMADKRAE) form a DNA-binding region, H-T-H motif.

This sequence belongs to the WhiA family.

Involved in cell division and chromosome segregation. The protein is Probable cell division protein WhiA of Corynebacterium glutamicum (strain ATCC 13032 / DSM 20300 / JCM 1318 / BCRC 11384 / CCUG 27702 / LMG 3730 / NBRC 12168 / NCIMB 10025 / NRRL B-2784 / 534).